Reading from the N-terminus, the 138-residue chain is Basic phospholipase A2 canebraxin B (138 aa).

The N-terminal stretch at 1–16 is a signal peptide; that stretch reads MRALWIVAVLLVAVEG. 7 disulfide bridges follow: Cys-42–Cys-131, Cys-44–Cys-60, Cys-59–Cys-111, Cys-65–Cys-138, Cys-66–Cys-104, Cys-73–Cys-97, and Cys-91–Cys-102. Residues Tyr-43, Gly-45, and Gly-47 each coordinate Ca(2+). His-63 is a catalytic residue. Asp-64 is a binding site for Ca(2+). Residue Asp-105 is part of the active site.

This sequence belongs to the phospholipase A2 family. Group II subfamily. Heterodimer of an acidic subunit and a basic chain. The acidic subunit is non-toxic, without enzymatic activity and comprises 3 peptides that are cross-linked by 7 disulfide bridges. The basic subunit is toxic, has phospholipase A2 activity and is composed of a single chain. Ca(2+) is required as a cofactor. Expressed by the venom gland.

The protein localises to the secreted. The enzyme catalyses a 1,2-diacyl-sn-glycero-3-phosphocholine + H2O = a 1-acyl-sn-glycero-3-phosphocholine + a fatty acid + H(+). Functionally, snake venom phospholipase A2 (PLA2) that shows presynaptic neurotoxicity. PLA2 catalyzes the calcium-dependent hydrolysis of the 2-acyl groups in 3-sn-phosphoglycerides. In Crotalus horridus (Timber rattlesnake), this protein is Basic phospholipase A2 canebraxin B.